The chain runs to 166 residues: Flagellar assembly factor FliW (166 aa).

Belongs to the FliW family. Interacts with translational regulator CsrA and flagellin(s).

It localises to the cytoplasm. Functionally, acts as an anti-CsrA protein, binds CsrA and prevents it from repressing translation of its target genes, one of which is flagellin. Binds to flagellin and participates in the assembly of the flagellum. The protein is Flagellar assembly factor FliW of Desulfovibrio desulfuricans (strain ATCC 27774 / DSM 6949 / MB).